The sequence spans 297 residues: Tyrosine recombinase XerD (297 aa).

One can recognise a Core-binding (CB) domain in the interval 2 to 86 (KKLDPIIEQF…CLRKFFRFLC (85 aa)). Positions 107–291 (QLPKSLSEEQ…AKTRLKSIHK (185 aa)) constitute a Tyr recombinase domain. Active-site residues include Arg147, Lys171, His243, Arg246, and His269. The active-site O-(3'-phospho-DNA)-tyrosine intermediate is the Tyr278.

Belongs to the 'phage' integrase family. XerD subfamily. Forms a cyclic heterotetrameric complex composed of two molecules of XerC and two molecules of XerD.

It localises to the cytoplasm. Its function is as follows. Site-specific tyrosine recombinase, which acts by catalyzing the cutting and rejoining of the recombining DNA molecules. The XerC-XerD complex is essential to convert dimers of the bacterial chromosome into monomers to permit their segregation at cell division. It also contributes to the segregational stability of plasmids. This chain is Tyrosine recombinase XerD, found in Haemophilus ducreyi (strain 35000HP / ATCC 700724).